Consider the following 414-residue polypeptide: MSLEAIKFDRSEPRKVSVKVLDQLLLPYTTKYIPVHTIDDGYRVIKNMQVRGAPAIAIVGSLSILTEVQFLQLDSQKSTQWFYDLSDWSNVNSKLLQRIEFLLSSRPTAVNLSNSLTEIRGILQNSSDLSDFDSKLFQYVCTLIDDDLANNITMGNNGAEYLLESLVQDGFQGEFGVLTICNTGSLATSGYGTALGVIRSLWAKSQSQGSENPPSKKQKKDAAPTKMVQVFPLETRPYNQGSRLTAYELVHDEIPATLITDSMVSYKIKTSPIPIKAAFVGADRIVRNGDTANKIGTFQLAIVCKQFGIKFFVVAPKTTIDNVTPSGDQIVVEERKPSEFRLVTGTAVDYVNESPILNDSQEPQSAKVGIAPPNVNVWNPAFDITPHEFIDGIVTEKGVFTKDDKGNFQLDKLF.

The segment covering 205-215 (SQSQGSENPPS) has biased composition (polar residues). The interval 205 to 224 (SQSQGSENPPSKKQKKDAAP) is disordered. D283 functions as the Proton donor in the catalytic mechanism.

Belongs to the eIF-2B alpha/beta/delta subunits family. MtnA subfamily.

It localises to the cytoplasm. The protein resides in the nucleus. It carries out the reaction 5-(methylsulfanyl)-alpha-D-ribose 1-phosphate = 5-(methylsulfanyl)-D-ribulose 1-phosphate. The protein operates within amino-acid biosynthesis; L-methionine biosynthesis via salvage pathway; L-methionine from S-methyl-5-thio-alpha-D-ribose 1-phosphate: step 1/6. In terms of biological role, catalyzes the interconversion of methylthioribose-1-phosphate (MTR-1-P) into methylthioribulose-1-phosphate (MTRu-1-P). The polypeptide is Methylthioribose-1-phosphate isomerase (Zygosaccharomyces rouxii (strain ATCC 2623 / CBS 732 / NBRC 1130 / NCYC 568 / NRRL Y-229)).